The following is a 438-amino-acid chain: Histidinol dehydrogenase (438 aa).

3 residues coordinate NAD(+): Tyr137, Gln198, and Asn221. Ser244, Gln266, and His269 together coordinate substrate. 2 residues coordinate Zn(2+): Gln266 and His269. Residues Glu334 and His335 each act as proton acceptor in the active site. Substrate is bound by residues His335, Asp368, Glu422, and His427. Residue Asp368 coordinates Zn(2+). A Zn(2+)-binding site is contributed by His427.

Belongs to the histidinol dehydrogenase family. Requires Zn(2+) as cofactor.

The enzyme catalyses L-histidinol + 2 NAD(+) + H2O = L-histidine + 2 NADH + 3 H(+). It participates in amino-acid biosynthesis; L-histidine biosynthesis; L-histidine from 5-phospho-alpha-D-ribose 1-diphosphate: step 9/9. Functionally, catalyzes the sequential NAD-dependent oxidations of L-histidinol to L-histidinaldehyde and then to L-histidine. The chain is Histidinol dehydrogenase from Aromatoleum aromaticum (strain DSM 19018 / LMG 30748 / EbN1) (Azoarcus sp. (strain EbN1)).